A 445-amino-acid chain; its full sequence is Putative transcription factor bHLH056 (445 aa).

Disordered regions lie at residues 36 to 70 (NQTHRQSYDPPPILRGSGSGRGEENAPLSQPPPHL), 224 to 260 (QIQPATESKLKAREETHGTEEARGSTSRKRSRTAEMH), and 365 to 445 (PFPN…QPTA). Positions 231 to 246 (SKLKAREETHGTEEAR) are enriched in basic and acidic residues. The 50-residue stretch at 255–304 (RTAEMHNLAERRRREKINEKMKTLQQLIPRCNKSTKVSTLDDAIEYVKSL) folds into the bHLH domain. Residues 418–433 (QGQTTSQLSSGQASSS) show a composition bias toward low complexity.

In terms of assembly, homodimer.

The protein localises to the nucleus. This chain is Putative transcription factor bHLH056 (BHLH56), found in Arabidopsis thaliana (Mouse-ear cress).